The sequence spans 494 residues: Truncated non-functional calcium-binding mitochondrial carrier SAL1-1 (494 aa).

One can recognise an EF-hand 1 domain in the interval 11 to 46; the sequence is QRDIRYACLFKELDVKGNGQVTLDNLISAFEKNDHP. Ca(2+)-binding residues include Lys65, Asp70, Asp93, Asp95, Asp97, Lys99, and Glu104. EF-hand domains lie at 80-115, 120-155, and 156-191; these read NAESQIWNGFQRIDLDHDGKIGINEINRYLSDLDNQ, NELNHELSNEKVNKFSRFFEWAFPKRKANIALRGQA, and SHKKNTDNDRSKKTTDSDLYVTYDQWRDFLLLVPRK. Ca(2+)-binding residues include Thr161 and Ser166. Solcar repeat units follow at residues 225–332 and 345–434; these read IRGF…TKKI and LSKF…LKKM. 5 helical membrane passes run 231 to 248, 307 to 326, 355 to 368, 409 to 428, and 458 to 475; these read FIAGGISGVISRTCTAPF, GNGLNVIKVFPESSIKFGSF, GLAGMAAQFSVYPI, RCHSRYSGHISLCCIRFGDF, and TSNGCIQWNCRSFCCLSN. The Solcar 3; truncated repeat unit spans residues 452-494; that stretch reads SKQPGCTSNGCIQWNCRSFCCLSNQSFKNKTTSPRNICTSLCV.

This sequence belongs to the mitochondrial carrier (TC 2.A.29) family.

Its subcellular location is the mitochondrion inner membrane. In terms of biological role, calcium-dependent mitochondrial solute carrier. This chain is Truncated non-functional calcium-binding mitochondrial carrier SAL1-1 (SAL1), found in Saccharomyces cerevisiae (strain ATCC 204508 / S288c) (Baker's yeast).